Here is a 238-residue protein sequence, read N- to C-terminus: Ribosomal RNA small subunit methyltransferase G (238 aa).

S-adenosyl-L-methionine contacts are provided by residues G77, F82, A128–E129, and R147. Residues R216–S238 form a disordered region.

This sequence belongs to the methyltransferase superfamily. RNA methyltransferase RsmG family.

Its subcellular location is the cytoplasm. Specifically methylates the N7 position of guanine in position 535 of 16S rRNA. In Halalkalibacterium halodurans (strain ATCC BAA-125 / DSM 18197 / FERM 7344 / JCM 9153 / C-125) (Bacillus halodurans), this protein is Ribosomal RNA small subunit methyltransferase G.